The sequence spans 601 residues: Elongation factor 4 (601 aa).

Positions 7 to 189 (RNIRNFSIIA…AIVHRIPPPA (183 aa)) constitute a tr-type G domain. Residues 19 to 24 (DHGKST) and 136 to 139 (NKID) each bind GTP.

It belongs to the TRAFAC class translation factor GTPase superfamily. Classic translation factor GTPase family. LepA subfamily.

Its subcellular location is the cell inner membrane. The enzyme catalyses GTP + H2O = GDP + phosphate + H(+). In terms of biological role, required for accurate and efficient protein synthesis under certain stress conditions. May act as a fidelity factor of the translation reaction, by catalyzing a one-codon backward translocation of tRNAs on improperly translocated ribosomes. Back-translocation proceeds from a post-translocation (POST) complex to a pre-translocation (PRE) complex, thus giving elongation factor G a second chance to translocate the tRNAs correctly. Binds to ribosomes in a GTP-dependent manner. This Xanthomonas oryzae pv. oryzae (strain MAFF 311018) protein is Elongation factor 4.